A 247-amino-acid polypeptide reads, in one-letter code: 14-3-3 protein zeta (247 aa).

It belongs to the 14-3-3 family. Homodimer.

The protein resides in the cytoplasm. Functionally, adapter protein implicated in the regulation of a large spectrum of both general and specialized signaling pathways. Binds to a large number of partners, usually by recognition of a phosphoserine or phosphothreonine motif. Binding generally results in the modulation of the activity of the binding partner. This Bombyx mori (Silk moth) protein is 14-3-3 protein zeta (14-3-3zeta).